Here is a 196-residue protein sequence, read N- to C-terminus: Carnitine operon protein CaiE (196 aa).

Positions 177–196 (RQMEENRPRLQGTTDVMPKR) are disordered.

Belongs to the transferase hexapeptide repeat family.

It participates in amine and polyamine metabolism; carnitine metabolism. Functionally, overproduction of CaiE stimulates the activity of CaiB and CaiD. This chain is Carnitine operon protein CaiE, found in Escherichia coli O17:K52:H18 (strain UMN026 / ExPEC).